The following is a 476-amino-acid chain: Probable serine carboxypeptidase CPVL (476 aa).

The N-terminal stretch at 1 to 22 (MVGAMWKVIVSLVLLMPGPCDG) is a signal peptide. 2 N-linked (GlcNAc...) asparagine glycosylation sites follow: N81 and N132. The active site involves S204. N-linked (GlcNAc...) asparagine glycosylation is found at N307 and N346. Catalysis depends on residues D388 and H448.

This sequence belongs to the peptidase S10 family. Expressed in macrophages but not in other leukocytes. Abundantly expressed in heart and kidney. Also expressed in spleen, leukocytes, and placenta.

In terms of biological role, may be involved in the digestion of phagocytosed particles in the lysosome, participation in an inflammatory protease cascade, and trimming of peptides for antigen presentation. In Homo sapiens (Human), this protein is Probable serine carboxypeptidase CPVL (CPVL).